We begin with the raw amino-acid sequence, 500 residues long: Probable malate:quinone oxidoreductase (500 aa).

The protein belongs to the MQO family. The cofactor is FAD.

It catalyses the reaction (S)-malate + a quinone = a quinol + oxaloacetate. The protein operates within carbohydrate metabolism; tricarboxylic acid cycle; oxaloacetate from (S)-malate (quinone route): step 1/1. This chain is Probable malate:quinone oxidoreductase, found in Bacillus mycoides (strain KBAB4) (Bacillus weihenstephanensis).